Here is a 226-residue protein sequence, read N- to C-terminus: Ribosomal RNA large subunit methyltransferase E (226 aa).

Residues glycine 82, tryptophan 84, aspartate 100, aspartate 116, and aspartate 140 each contribute to the S-adenosyl-L-methionine site. The active-site Proton acceptor is lysine 180.

The protein belongs to the class I-like SAM-binding methyltransferase superfamily. RNA methyltransferase RlmE family.

It is found in the cytoplasm. The catalysed reaction is uridine(2552) in 23S rRNA + S-adenosyl-L-methionine = 2'-O-methyluridine(2552) in 23S rRNA + S-adenosyl-L-homocysteine + H(+). Its function is as follows. Specifically methylates the uridine in position 2552 of 23S rRNA at the 2'-O position of the ribose in the fully assembled 50S ribosomal subunit. This chain is Ribosomal RNA large subunit methyltransferase E, found in Caulobacter sp. (strain K31).